A 270-amino-acid polypeptide reads, in one-letter code: Orotidine 5'-phosphate decarboxylase (270 aa).

Residue K89 is the Proton donor of the active site.

The protein belongs to the OMP decarboxylase family. Type 2 subfamily.

It carries out the reaction orotidine 5'-phosphate + H(+) = UMP + CO2. Its pathway is pyrimidine metabolism; UMP biosynthesis via de novo pathway; UMP from orotate: step 2/2. In Dehalococcoides mccartyi (strain ATCC BAA-2100 / JCM 16839 / KCTC 5957 / BAV1), this protein is Orotidine 5'-phosphate decarboxylase.